The following is a 113-amino-acid chain: Small ribosomal subunit protein uS15 (113 aa).

This sequence belongs to the universal ribosomal protein uS15 family. Part of the 30S ribosomal subunit. Forms a bridge to the 50S subunit in the 70S ribosome, contacting the 23S rRNA.

Functionally, one of the primary rRNA binding proteins, it binds directly to 16S rRNA where it helps nucleate assembly of the platform of the 30S subunit by binding and bridging several RNA helices of the 16S rRNA. Its function is as follows. Forms an intersubunit bridge (bridge B4) with the 23S rRNA of the 50S subunit in the ribosome. The chain is Small ribosomal subunit protein uS15 from Haemophilus influenzae (strain PittEE).